A 775-amino-acid polypeptide reads, in one-letter code: 5-methyltetrahydropteroyltriglutamate--homocysteine methyltransferase (775 aa).

5-methyltetrahydropteroyltri-L-glutamate contacts are provided by residues 15 to 18 (RELK) and Lys118. L-homocysteine contacts are provided by residues 448 to 450 (IGS) and Glu501. Residues 448-450 (IGS) and Glu501 each bind L-methionine. 5-methyltetrahydropteroyltri-L-glutamate-binding positions include 532–533 (RC) and Trp578. Asp616 contacts L-homocysteine. L-methionine is bound at residue Asp616. A 5-methyltetrahydropteroyltri-L-glutamate-binding site is contributed by Glu622. Zn(2+) is bound by residues His658, Cys660, and Glu682. His711 (proton donor) is an active-site residue. Position 743 (Cys743) interacts with Zn(2+).

It belongs to the vitamin-B12 independent methionine synthase family. The cofactor is Zn(2+).

It catalyses the reaction 5-methyltetrahydropteroyltri-L-glutamate + L-homocysteine = tetrahydropteroyltri-L-glutamate + L-methionine. It functions in the pathway amino-acid biosynthesis; L-methionine biosynthesis via de novo pathway; L-methionine from L-homocysteine (MetE route): step 1/1. In terms of biological role, catalyzes the transfer of a methyl group from 5-methyltetrahydrofolate to homocysteine resulting in methionine formation. The polypeptide is 5-methyltetrahydropteroyltriglutamate--homocysteine methyltransferase (Cytophaga hutchinsonii (strain ATCC 33406 / DSM 1761 / CIP 103989 / NBRC 15051 / NCIMB 9469 / D465)).